The primary structure comprises 298 residues: UDP-N-acetylenolpyruvoylglucosamine reductase (298 aa).

One can recognise an FAD-binding PCMH-type domain in the interval 27 to 191 (TGGNADVFVM…LDATFSLELE (165 aa)). Arg170 is a catalytic residue. Catalysis depends on Ser220, which acts as the Proton donor. Glu290 is an active-site residue.

It belongs to the MurB family. Requires FAD as cofactor.

It is found in the cytoplasm. It catalyses the reaction UDP-N-acetyl-alpha-D-muramate + NADP(+) = UDP-N-acetyl-3-O-(1-carboxyvinyl)-alpha-D-glucosamine + NADPH + H(+). Its pathway is cell wall biogenesis; peptidoglycan biosynthesis. Cell wall formation. This is UDP-N-acetylenolpyruvoylglucosamine reductase from Listeria innocua serovar 6a (strain ATCC BAA-680 / CLIP 11262).